A 339-amino-acid chain; its full sequence is Alpha-N-dichloroacetyl-p-aminophenylserinol N-oxygenase (339 aa).

The span at 1-19 (MRDHTDEKSEAAGNDDGHV) shows a compositional bias: basic and acidic residues. Residues 1 to 22 (MRDHTDEKSEAAGNDDGHVRIG) are disordered. Residues E109, E144, H147, E205, H232, E236, and H239 each coordinate Fe cation.

It belongs to the AurF N-oxygenase family. Fe(2+) is required as a cofactor.

The enzyme catalyses alpha-N-dichloroacetyl-p-aminophenylserinol + AH2 + 2 O2 = chloramphenicol + A + 2 H2O. Its pathway is antibiotic biosynthesis. Involved in chloramphenicol biosynthesis. Catalyzes the six-electron oxidation of an aryl-amine precursor of chloramphenicol (NH2-CAM) to yield the aryl-nitro group of chloramphenicol (CAM). During catalysis, upon exposure of the diferrous cluster to O(2), ClmI forms an exceptionally long-lived peroxo intermediate (CmlI-peroxo), which reacts with NH2-CAM to form CAM. This Streptomyces venezuelae (strain ATCC 10712 / CBS 650.69 / DSM 40230 / JCM 4526 / NBRC 13096 / PD 04745) protein is Alpha-N-dichloroacetyl-p-aminophenylserinol N-oxygenase.